Consider the following 548-residue polypeptide: Glucose-6-phosphate isomerase (548 aa).

Glutamate 355 serves as the catalytic Proton donor. Residues histidine 386 and lysine 514 contribute to the active site.

This sequence belongs to the GPI family.

It is found in the cytoplasm. It carries out the reaction alpha-D-glucose 6-phosphate = beta-D-fructose 6-phosphate. Its pathway is carbohydrate biosynthesis; gluconeogenesis. It participates in carbohydrate degradation; glycolysis; D-glyceraldehyde 3-phosphate and glycerone phosphate from D-glucose: step 2/4. Its function is as follows. Catalyzes the reversible isomerization of glucose-6-phosphate to fructose-6-phosphate. This Hamiltonella defensa subsp. Acyrthosiphon pisum (strain 5AT) protein is Glucose-6-phosphate isomerase.